A 319-amino-acid chain; its full sequence is Glycine--tRNA ligase alpha subunit (319 aa).

This sequence belongs to the class-II aminoacyl-tRNA synthetase family. In terms of assembly, tetramer of two alpha and two beta subunits.

The protein resides in the cytoplasm. It carries out the reaction tRNA(Gly) + glycine + ATP = glycyl-tRNA(Gly) + AMP + diphosphate. The polypeptide is Glycine--tRNA ligase alpha subunit (Oenococcus oeni (strain ATCC BAA-331 / PSU-1)).